The following is a 907-amino-acid chain: Schlafen family member 13 (907 aa).

Positions 1–353 are n'-domain region; that stretch reads MEIHPSLVVE…WVRMMVDIGP (353 aa). Residues Glu205 and Glu210 contribute to the active site. Zn(2+) is bound by residues His281, Cys283, and Cys318. An ATP-binding site is contributed by 604-611; the sequence is GMPGSGKT.

Belongs to the Schlafen family. Subgroup III subfamily. Mg(2+) is required as a cofactor.

The protein resides in the cytoplasm. Endoribonuclease that cleaves tRNAs and rRNAs. Cleaves tRNAs 11 nucleotides from the 3'-terminus at the acceptor stem. Does not act on tRNA(Sec). In Rattus norvegicus (Rat), this protein is Schlafen family member 13.